The primary structure comprises 156 residues: Glutaredoxin-2, mitochondrial (156 aa).

The transit peptide at 1-19 (MSWRRAASVGRRLVASGRI) directs the protein to the mitochondrion. One can recognise a Glutaredoxin domain in the interval 50–150 (VNQIQETISN…PLVHQCYLKK (101 aa)). Cys-61 is a binding site for [2Fe-2S] cluster. Lys-67 lines the glutathione pocket. Cys-70 carries the post-translational modification S-glutathionyl cysteine; alternate. Cys-70 and Cys-73 are oxidised to a cystine. 2 residues coordinate glutathione: Gln-102 and Val-114. Cys-146 lines the [2Fe-2S] cluster pocket.

The protein belongs to the glutaredoxin family. In terms of assembly, monomer; active form. Homodimer; inactive form. The homodimer is probably linked by 1 2Fe-2S cluster. Widely expressed. Highly expressed in testis, and at much lower level in kidney and brain.

The protein localises to the mitochondrion. Its subcellular location is the nucleus. Its activity is regulated as follows. The 2Fe-2S present in the homodimer leads to inactivation of the enzyme. The 2Fe-2S may serve as a redox sensor: the presence of one-electron oxidants or reductants leading to the loss of the 2Fe-2S cluster, subsequent monomerization and activation of the enzyme. Functionally, glutathione-dependent oxidoreductase that facilitates the maintenance of mitochondrial redox homeostasis upon induction of apoptosis by oxidative stress. Involved in response to hydrogen peroxide and regulation of apoptosis caused by oxidative stress. Acts as a very efficient catalyst of monothiol reactions because of its high affinity for protein glutathione-mixed disulfides. Can receive electrons not only from glutathione (GSH), but also from thioredoxin reductase supporting both monothiol and dithiol reactions. Efficiently catalyzes both glutathionylation and deglutathionylation of mitochondrial complex I, which in turn regulates the superoxide production by the complex. Overexpression decreases the susceptibility to apoptosis and prevents loss of cardiolipin and cytochrome c release. The sequence is that of Glutaredoxin-2, mitochondrial (Glrx2) from Mus musculus (Mouse).